A 445-amino-acid polypeptide reads, in one-letter code: MDTTTMPNLLWHKPGVAIDASIQTFLAADDVLLDREFFLYDITASTAHAQALQRIGLLTPDELDNILRELQHLSDEYRNGTFLLDTQYEDGHSAIESRLTERLGDTGRKIHTGRSRNDQILVATRLWLKDRLTQLSTLNRDIAHHALQRAAAEQHLPMPGYTHLQRAVVSSAGMWWAGWAESFIDNALRAADTLALIDCNPLGTAAGYGVNLPLDRPHTTTALGFARLQVNPICAQLSRGKFELAALEALGSATLDLRRIAWDLSLFTTSEFAFITLPPEYSTGSSIMPNKRNPDVIELMRATHASVAAARTEIEQLLSLPSGYHRDLQNSKGAIVRGFNRGLAALELLPALLSRLQWRPDTLRAAIDPGMYATDAAIEAAIAGIPFRDAYQMAAKTADTAAQDRTPETSLTARRSPGAAADLCLETLRARWHTLTQPTSDPDPR.

The protein belongs to the lyase 1 family. Argininosuccinate lyase subfamily.

The protein localises to the cytoplasm. The catalysed reaction is 2-(N(omega)-L-arginino)succinate = fumarate + L-arginine. It functions in the pathway amino-acid biosynthesis; L-arginine biosynthesis; L-arginine from L-ornithine and carbamoyl phosphate: step 3/3. The polypeptide is Argininosuccinate lyase (Xylella fastidiosa (strain Temecula1 / ATCC 700964)).